Here is a 238-residue protein sequence, read N- to C-terminus: Ribonuclease M (238 aa).

5 disulfides stabilise this stretch: Cys5–Cys22, Cys13–Cys58, Cys21–Cys126, Cys66–Cys118, and Cys191–Cys225. His51 is a catalytic residue. N-linked (GlcNAc...) asparagine glycosylation occurs at Asn74. Catalysis depends on residues Glu111 and His115.

This sequence belongs to the RNase T2 family.

It catalyses the reaction a ribonucleotidyl-ribonucleotide-RNA + H2O = a 3'-end 3'-phospho-ribonucleotide-RNA + a 5'-end dephospho-ribonucleoside-RNA + H(+). Functionally, this is a base non-specific and adenylic acid preferential ribonuclease. The chain is Ribonuclease M from Aspergillus phoenicis (Aspergillus saitoi).